Consider the following 347-residue polypeptide: Biotin synthase (347 aa).

In terms of domain architecture, Radical SAM core spans 40-258 (AQVQVSTLLS…IAVARIVMPR (219 aa)). 3 residues coordinate [4Fe-4S] cluster: Cys-55, Cys-59, and Cys-62. The [2Fe-2S] cluster site is built by Cys-99, Cys-130, Cys-190, and Arg-262.

It belongs to the radical SAM superfamily. Biotin synthase family. Homodimer. It depends on [4Fe-4S] cluster as a cofactor. [2Fe-2S] cluster is required as a cofactor.

It catalyses the reaction (4R,5S)-dethiobiotin + (sulfur carrier)-SH + 2 reduced [2Fe-2S]-[ferredoxin] + 2 S-adenosyl-L-methionine = (sulfur carrier)-H + biotin + 2 5'-deoxyadenosine + 2 L-methionine + 2 oxidized [2Fe-2S]-[ferredoxin]. It functions in the pathway cofactor biosynthesis; biotin biosynthesis; biotin from 7,8-diaminononanoate: step 2/2. Its function is as follows. Catalyzes the conversion of dethiobiotin (DTB) to biotin by the insertion of a sulfur atom into dethiobiotin via a radical-based mechanism. This chain is Biotin synthase, found in Stenotrophomonas maltophilia (strain R551-3).